A 799-amino-acid chain; its full sequence is Phosphate transporter PHO1-1 (799 aa).

The Cytoplasmic segment spans residues 1-406 (MVKFSKQFEG…TQRKESHTVT (406 aa)). Positions 2–354 (VKFSKQFEGQ…GKQVLSVYLR (353 aa)) constitute an SPX domain. Positions 170 to 243 (SLSGHHRAAA…GSLSRQSLGR (74 aa)) are disordered. The segment covering 180 to 193 (GDDPSISSSSATSG) has biased composition (low complexity). Residues 210-222 (ESQHETAVMRDPE) show a composition bias toward basic and acidic residues. Polar residues predominate over residues 234 to 243 (GSLSRQSLGR). A helical membrane pass occupies residues 407-427 (FFIGLMTGCFVALFLGYCIMA). Residues 428-447 (HIAGMYTQRRDSIYMETVYP) are Extracellular-facing. Residues 448 to 468 (VFSMFSLMFLHLFMYGCNMVA) traverse the membrane as a helical segment. The Cytoplasmic segment spans residues 469-492 (WRKARINYSFIFEFAAGRELKYRD). A helical membrane pass occupies residues 493–513 (VFLVCTASMAVIVGVMFAHLS). Topologically, residues 514–522 (LAVRGFHAQ) are extracellular. The chain crosses the membrane as a helical span at residues 523–543 (AIPGFLLLGFLLLLFCPFNMV). Over 544–672 (YRSTRFQFLR…AYEKDRSLGS (129 aa)) the chain is Cytoplasmic. The EXS domain occupies 608–799 (INTKHIRDLA…LPFHEADEED (192 aa)). Residues 673–693 (LSLLVIVSSSATMYQLYWDFV) form a helical membrane-spanning segment. Topologically, residues 694–718 (KDWGLLQPNSKNPWLRNDLILKSKS) are extracellular. The helical transmembrane segment at 719-739 (IYYLSMGLNLVLRLAWLQTVI) threads the bilayer. At 740–799 (HPNFGSLDSRVTSFFLAALEVIRRGHWNFYRLENEHLNNAGKFRAVKTVPLPFHEADEED) the chain is on the cytoplasmic side.

It belongs to the SYG1 (TC 2.A.94) family. In terms of tissue distribution, expressed in roots and flowers.

The protein localises to the cell membrane. In terms of biological role, may transport inorganic phosphate (Pi). This chain is Phosphate transporter PHO1-1 (PHO1-1), found in Oryza sativa subsp. japonica (Rice).